A 235-amino-acid polypeptide reads, in one-letter code: MEEGDFFNCCFSEISSGMTMNKKKMKKSNNQKRFSEEQIKSLELIFESETRLEPRKKVQVARELGLQPRQVAIWFQNKRARWKTKQLEKEYNTLRANYNNLASQFEIMKKEKQSLVSELQRLNEEMQRPKEEKHHECCGDQGLALSSSTESHNGKSEPEGRLDQGSVLCNDGDYNNNIKTEYFGFEEETDHELMNIVEKADDSCLTSSENWGGFNSDSLLDQSSSNYPNWWEFWS.

Positions 27–86 form a DNA-binding region, homeobox; sequence KSNNQKRFSEEQIKSLELIFESETRLEPRKKVQVARELGLQPRQVAIWFQNKRARWKTKQ. The segment at 87-122 is leucine-zipper; that stretch reads LEKEYNTLRANYNNLASQFEIMKKEKQSLVSELQRL. 2 stretches are compositionally biased toward basic and acidic residues: residues 128–138 and 152–162; these read RPKEEKHHECC and HNGKSEPEGRL. A disordered region spans residues 128-167; the sequence is RPKEEKHHECCGDQGLALSSSTESHNGKSEPEGRLDQGSV.

The protein belongs to the HD-ZIP homeobox family. Class I subfamily. In terms of assembly, interacts with TFIIB1. As to expression, widely expressed.

Its subcellular location is the nucleus. Functionally, probable transcription activator that may act as growth regulators in response to water deficit. The sequence is that of Homeobox-leucine zipper protein ATHB-12 (ATHB-12) from Arabidopsis thaliana (Mouse-ear cress).